The chain runs to 306 residues: Pantothenate synthetase (306 aa).

37-44 (MGALHEGH) lines the ATP pocket. The active-site Proton donor is His-44. Gln-69 serves as a coordination point for (R)-pantoate. Gln-69 is a binding site for beta-alanine. 155 to 158 (GEKD) contributes to the ATP binding site. Gln-161 contacts (R)-pantoate. Residues Val-184 and 192–195 (KSSR) each bind ATP.

The protein belongs to the pantothenate synthetase family. As to quaternary structure, homodimer.

The protein resides in the cytoplasm. The enzyme catalyses (R)-pantoate + beta-alanine + ATP = (R)-pantothenate + AMP + diphosphate + H(+). The protein operates within cofactor biosynthesis; (R)-pantothenate biosynthesis; (R)-pantothenate from (R)-pantoate and beta-alanine: step 1/1. Functionally, catalyzes the condensation of pantoate with beta-alanine in an ATP-dependent reaction via a pantoyl-adenylate intermediate. This is Pantothenate synthetase from Corynebacterium jeikeium (strain K411).